The chain runs to 278 residues: Small ribosomal subunit protein uS2 (278 aa).

A disordered region spans residues 233–257 (IDMEAAGEAPANKGKKKSVKARLDK).

It belongs to the universal ribosomal protein uS2 family.

The chain is Small ribosomal subunit protein uS2 from Bacteroides thetaiotaomicron (strain ATCC 29148 / DSM 2079 / JCM 5827 / CCUG 10774 / NCTC 10582 / VPI-5482 / E50).